The chain runs to 246 residues: Large ribosomal subunit protein uL30-like 1 (246 aa).

Ser-54 is subject to Phosphoserine.

Belongs to the universal ribosomal protein uL30 family.

The sequence is that of Large ribosomal subunit protein uL30-like 1 (RPL7L1) from Pongo abelii (Sumatran orangutan).